The chain runs to 404 residues: Imidazolonepropionase (404 aa).

Fe(3+) contacts are provided by histidine 73 and histidine 75. Zn(2+) is bound by residues histidine 73 and histidine 75. 4-imidazolone-5-propanoate-binding residues include arginine 82, tyrosine 145, and histidine 178. Tyrosine 145 is a binding site for N-formimidoyl-L-glutamate. Histidine 243 contacts Fe(3+). Histidine 243 provides a ligand contact to Zn(2+). Residue glutamine 246 coordinates 4-imidazolone-5-propanoate. Position 318 (aspartate 318) interacts with Fe(3+). Position 318 (aspartate 318) interacts with Zn(2+). Positions 320 and 322 each coordinate N-formimidoyl-L-glutamate. Serine 323 is a binding site for 4-imidazolone-5-propanoate.

The protein belongs to the metallo-dependent hydrolases superfamily. HutI family. Zn(2+) is required as a cofactor. Requires Fe(3+) as cofactor.

Its subcellular location is the cytoplasm. It catalyses the reaction 4-imidazolone-5-propanoate + H2O = N-formimidoyl-L-glutamate. It functions in the pathway amino-acid degradation; L-histidine degradation into L-glutamate; N-formimidoyl-L-glutamate from L-histidine: step 3/3. Its function is as follows. Catalyzes the hydrolytic cleavage of the carbon-nitrogen bond in imidazolone-5-propanoate to yield N-formimidoyl-L-glutamate. It is the third step in the universal histidine degradation pathway. The protein is Imidazolonepropionase of Bradyrhizobium sp. (strain BTAi1 / ATCC BAA-1182).